Here is a 384-residue protein sequence, read N- to C-terminus: uncharacterized protein (384 aa).

This is an uncharacterized protein from Nostoc sp. (strain PCC 7120 / SAG 25.82 / UTEX 2576).